We begin with the raw amino-acid sequence, 164 residues long: MTDSHATGDMPRVTIYTDGACRGNPGPGGWGAVLRYGQHEKTLKGGEAVTTNNRMELMAAIQALRTLTRACDVALWTDSEYLRKGITEWIHGWVKRGWKTAAKQPVKNAELWRELLAETQRHRIEWHWVKGHSGHEGNELADTLANAATDEIQAAKRQAMAGEQ.

Positions D9 to D150 constitute an RNase H type-1 domain. Mg(2+) contacts are provided by D18, E56, D78, and D142.

This sequence belongs to the RNase H family. Monomer. Mg(2+) serves as cofactor.

Its subcellular location is the cytoplasm. It catalyses the reaction Endonucleolytic cleavage to 5'-phosphomonoester.. Its function is as follows. Endonuclease that specifically degrades the RNA of RNA-DNA hybrids. This is Ribonuclease H from Chromohalobacter salexigens (strain ATCC BAA-138 / DSM 3043 / CIP 106854 / NCIMB 13768 / 1H11).